Reading from the N-terminus, the 115-residue chain is NADH-ubiquinone oxidoreductase chain 3 (115 aa).

3 consecutive transmembrane segments (helical) span residues 3–23, 55–75, and 87–107; these read IMITLFINMSLASLLVLIAFW, FFLVAITFLLFDLEIALLLPL, and MLTTALVLILLLALGLAYEWL.

It belongs to the complex I subunit 3 family. Core subunit of respiratory chain NADH dehydrogenase (Complex I) which is composed of 45 different subunits. Interacts with TMEM186. Interacts with TMEM242.

It localises to the mitochondrion inner membrane. It carries out the reaction a ubiquinone + NADH + 5 H(+)(in) = a ubiquinol + NAD(+) + 4 H(+)(out). In terms of biological role, core subunit of the mitochondrial membrane respiratory chain NADH dehydrogenase (Complex I) which catalyzes electron transfer from NADH through the respiratory chain, using ubiquinone as an electron acceptor. Essential for the catalytic activity of complex I. This chain is NADH-ubiquinone oxidoreductase chain 3, found in Dasypus novemcinctus (Nine-banded armadillo).